We begin with the raw amino-acid sequence, 383 residues long: Succinyl-diaminopimelate desuccinylase (383 aa).

Histidine 73 is a Zn(2+) binding site. Aspartate 75 is an active-site residue. Position 107 (aspartate 107) interacts with Zn(2+). Glutamate 141 serves as the catalytic Proton acceptor. Zn(2+) contacts are provided by glutamate 142, glutamate 170, and histidine 356.

This sequence belongs to the peptidase M20A family. DapE subfamily. In terms of assembly, homodimer. Zn(2+) serves as cofactor. It depends on Co(2+) as a cofactor.

The enzyme catalyses N-succinyl-(2S,6S)-2,6-diaminopimelate + H2O = (2S,6S)-2,6-diaminopimelate + succinate. Its pathway is amino-acid biosynthesis; L-lysine biosynthesis via DAP pathway; LL-2,6-diaminopimelate from (S)-tetrahydrodipicolinate (succinylase route): step 3/3. In terms of biological role, catalyzes the hydrolysis of N-succinyl-L,L-diaminopimelic acid (SDAP), forming succinate and LL-2,6-diaminopimelate (DAP), an intermediate involved in the bacterial biosynthesis of lysine and meso-diaminopimelic acid, an essential component of bacterial cell walls. This is Succinyl-diaminopimelate desuccinylase from Pseudomonas aeruginosa (strain UCBPP-PA14).